The sequence spans 417 residues: Dihydrolipoyllysine-residue succinyltransferase component of 2-oxoglutarate dehydrogenase complex (417 aa).

Positions 1 to 76 (MAEIKVPELA…QVGEIIGTIS (76 aa)) constitute a Lipoyl-binding domain. Lys42 carries the post-translational modification N6-lipoyllysine. Positions 75-191 (ISEGAGESSA…SFDKPVEVQK (117 aa)) are disordered. Basic and acidic residues-rich tracts occupy residues 89-103 (EKTE…EKQA) and 152-163 (RKQDVEAYEKPA). Residues 123–160 (IASPSARKLAREKGIDLSQVPTGDPLGRVRKQDVEAYE) form the Peripheral subunit-binding (PSBD) domain. The segment covering 164–182 (SKPAPQQKQQPQAQKAQQS) has biased composition (low complexity). Residues His388 and Asp392 contribute to the active site.

The protein belongs to the 2-oxoacid dehydrogenase family. In terms of assembly, forms a 24-polypeptide structural core with octahedral symmetry. Part of the 2-oxoglutarate dehydrogenase (OGDH) complex composed of E1 (2-oxoglutarate dehydrogenase), E2 (dihydrolipoamide succinyltransferase) and E3 (dihydrolipoamide dehydrogenase); the complex contains multiple copies of the three enzymatic components (E1, E2 and E3). (R)-lipoate serves as cofactor.

The catalysed reaction is N(6)-[(R)-dihydrolipoyl]-L-lysyl-[protein] + succinyl-CoA = N(6)-[(R)-S(8)-succinyldihydrolipoyl]-L-lysyl-[protein] + CoA. The protein operates within amino-acid degradation; L-lysine degradation via saccharopine pathway; glutaryl-CoA from L-lysine: step 6/6. In terms of biological role, E2 component of the 2-oxoglutarate dehydrogenase (OGDH) complex which catalyzes the second step in the conversion of 2-oxoglutarate to succinyl-CoA and CO(2). The sequence is that of Dihydrolipoyllysine-residue succinyltransferase component of 2-oxoglutarate dehydrogenase complex (odhB) from Bacillus subtilis (strain 168).